Reading from the N-terminus, the 873-residue chain is Bifunctional uridylyltransferase/uridylyl-removing enzyme (873 aa).

Residues 1-332 (MKYLSPLSLS…HQGEQDDAII (332 aa)) form a uridylyltransferase region. The interval 333–692 (IDDDFQRRGR…ISKNASRGGT (360 aa)) is uridylyl-removing. Positions 451–573 (VDEHSIRLLK…VRDEERLDYL (123 aa)) constitute an HD domain. ACT domains are found at residues 693-777 (EIFV…RPPR) and 800-873 (LMEF…RLSS).

The protein belongs to the GlnD family. Mg(2+) serves as cofactor.

It carries out the reaction [protein-PII]-L-tyrosine + UTP = [protein-PII]-uridylyl-L-tyrosine + diphosphate. The catalysed reaction is [protein-PII]-uridylyl-L-tyrosine + H2O = [protein-PII]-L-tyrosine + UMP + H(+). Uridylyltransferase (UTase) activity is inhibited by glutamine, while glutamine activates uridylyl-removing (UR) activity. Its function is as follows. Modifies, by uridylylation and deuridylylation, the PII regulatory proteins (GlnB and homologs), in response to the nitrogen status of the cell that GlnD senses through the glutamine level. Under low glutamine levels, catalyzes the conversion of the PII proteins and UTP to PII-UMP and PPi, while under higher glutamine levels, GlnD hydrolyzes PII-UMP to PII and UMP (deuridylylation). Thus, controls uridylylation state and activity of the PII proteins, and plays an important role in the regulation of nitrogen assimilation and metabolism. The protein is Bifunctional uridylyltransferase/uridylyl-removing enzyme of Aliivibrio fischeri (strain ATCC 700601 / ES114) (Vibrio fischeri).